The chain runs to 67 residues: Large ribosomal subunit protein bL35 (67 aa).

Residues 1 to 16 (MPKMKTKSGAKKRFRV) are compositionally biased toward basic residues. A disordered region spans residues 1 to 25 (MPKMKTKSGAKKRFRVRPGGTVKRG).

Belongs to the bacterial ribosomal protein bL35 family.

This chain is Large ribosomal subunit protein bL35, found in Polaromonas sp. (strain JS666 / ATCC BAA-500).